We begin with the raw amino-acid sequence, 559 residues long: MAAQGSLLIASFLLILLVLAKPLGSGLARLIAASPLPGVAGVERVLWRTLGITGHEMNWRQYLLALLTLNLLGLSILFCLLFWQEWLPLNPQRLPGLSWDLALNTAVSFVTNTNWQAYSGESTLSYFSQMAGLTVQNFLSAATGIAVVFALIRAFTRQNMHTLGNAWQDLVRITLWILFPVALIIALFFIQQGVLQNLSAYQPITTLEGAQQLLPMGPVASQEAIKMLGTNGGGFFNANSSHPFENPTALTNMVQMLAIFLIPAALCFAFGEAAGDRRQGRALLWAMSFIFVVCVAVVMWAEVQGNPHLLTAGADSSVNMEGKETRFGVLASSLFAVVTTAASCGAVDAMHDSFTALGGMVPMWLMQIGEVVFGGVGSGLYGMLLFVLLAVFIAGLMIGRTPEYLGKKIDVREMKMTALAILVTPMLVLLGSALAMMTDAGRSAMLNPGPHGFSEVLYAVSSAANNNGSAFAGLSANSPFWNCLLAFCMFVGRFGVIIPVMAIAGSLVSKKAQPASQGTLATHGALFIGLLIGTVLLVGALTFIPALALGPVAEHFSLP.

12 helical membrane-spanning segments follow: residues 7–27 (LLIA…GSGL), 63–83 (LLAL…LLFW), 132–152 (GLTV…FALI), 170–190 (LVRI…LFFI), 253–273 (MVQM…FGEA), 283–303 (LLWA…WAEV), 327–347 (FGVL…CGAV), 356–376 (ALGG…FGGV), 379–399 (GLYG…LMIG), 416–436 (MTAL…ALAM), 484–504 (LLAF…MAIA), and 524–544 (GALF…LTFI).

It belongs to the KdpA family. In terms of assembly, the system is composed of three essential subunits: KdpA, KdpB and KdpC.

Its subcellular location is the cell inner membrane. Part of the high-affinity ATP-driven potassium transport (or Kdp) system, which catalyzes the hydrolysis of ATP coupled with the electrogenic transport of potassium into the cytoplasm. This subunit binds the periplasmic potassium ions and delivers the ions to the membrane domain of KdpB through an intramembrane tunnel. The polypeptide is Potassium-transporting ATPase potassium-binding subunit (Salmonella arizonae (strain ATCC BAA-731 / CDC346-86 / RSK2980)).